Reading from the N-terminus, the 211-residue chain is Small ribosomal subunit protein uS3c (211 aa).

One can recognise a KH type-2 domain in the interval 39–109 (IREFAESRLP…NVALYVTKTQ (71 aa)).

The protein belongs to the universal ribosomal protein uS3 family. Part of the 30S ribosomal subunit.

The protein localises to the plastid. The protein resides in the chloroplast. This chain is Small ribosomal subunit protein uS3c (rps3), found in Ostreococcus tauri.